The following is a 675-amino-acid chain: Potassium-transporting ATPase ATP-binding subunit 2 (675 aa).

Transmembrane regions (helical) follow at residues 34 to 54 (IMFV…FPDI), 65 to 85 (LITI…SEAF), 216 to 236 (IALF…IVTL), and 245 to 265 (LILP…TTIG). D304 acts as the 4-aspartylphosphate intermediate in catalysis. ATP contacts are provided by residues D341, E345, 372–379 (FTAETRMS), and K390. Mg(2+) contacts are provided by D513 and D517. Helical transmembrane passes span 569–591 (ALTT…ALMM), 611–631 (AIIS…PIAM), and 644–664 (IFIN…FLGI).

The protein belongs to the cation transport ATPase (P-type) (TC 3.A.3) family. Type IA subfamily. As to quaternary structure, the system is composed of three essential subunits: KdpA, KdpB and KdpC.

The protein resides in the cell membrane. The catalysed reaction is K(+)(out) + ATP + H2O = K(+)(in) + ADP + phosphate + H(+). Part of the high-affinity ATP-driven potassium transport (or Kdp) system, which catalyzes the hydrolysis of ATP coupled with the electrogenic transport of potassium into the cytoplasm. This subunit is responsible for energy coupling to the transport system and for the release of the potassium ions to the cytoplasm. This chain is Potassium-transporting ATPase ATP-binding subunit 2, found in Staphylococcus aureus (strain Mu50 / ATCC 700699).